The following is a 101-amino-acid chain: NAD(P)H-quinone oxidoreductase subunit 4L, chloroplastic (101 aa).

Helical transmembrane passes span 2-22 (YIENFLLLASALFCIGIYGLL), 32-52 (MCLELCLNAININFIAFSNFI), and 61-81 (VIAIFIMTIAAAEAAIGLALV).

It belongs to the complex I subunit 4L family. In terms of assembly, NDH is composed of at least 16 different subunits, 5 of which are encoded in the nucleus.

Its subcellular location is the plastid. The protein localises to the chloroplast thylakoid membrane. It carries out the reaction a plastoquinone + NADH + (n+1) H(+)(in) = a plastoquinol + NAD(+) + n H(+)(out). The enzyme catalyses a plastoquinone + NADPH + (n+1) H(+)(in) = a plastoquinol + NADP(+) + n H(+)(out). NDH shuttles electrons from NAD(P)H:plastoquinone, via FMN and iron-sulfur (Fe-S) centers, to quinones in the photosynthetic chain and possibly in a chloroplast respiratory chain. The immediate electron acceptor for the enzyme in this species is believed to be plastoquinone. Couples the redox reaction to proton translocation, and thus conserves the redox energy in a proton gradient. The protein is NAD(P)H-quinone oxidoreductase subunit 4L, chloroplastic of Mesostigma viride (Green alga).